Reading from the N-terminus, the 92-residue chain is DNA-directed RNA polymerase subunit omega (92 aa).

This sequence belongs to the RNA polymerase subunit omega family. As to quaternary structure, the RNAP catalytic core consists of 2 alpha, 1 beta, 1 beta' and 1 omega subunit. When a sigma factor is associated with the core the holoenzyme is formed, which can initiate transcription.

It catalyses the reaction RNA(n) + a ribonucleoside 5'-triphosphate = RNA(n+1) + diphosphate. In terms of biological role, promotes RNA polymerase assembly. Latches the N- and C-terminal regions of the beta' subunit thereby facilitating its interaction with the beta and alpha subunits. This is DNA-directed RNA polymerase subunit omega from Shewanella baltica (strain OS223).